A 371-amino-acid chain; its full sequence is MSEISLIMLAAGNSTRFNTKVKKQFLRLGNDPLWLYATKNLSSFYPFKKIVVTSSNIAYMKKFTKNYEFIEGGDTRAESLKKALELIDSEFVMVSDVARVLVSKNLFDRLIENLDKADCITPALKVADTTLFDNEALQREKIKLIQTPQISKTKLLKKALDQNLEFTDDSTAIAAMGGKIWFVEGEENARKLTFKEDLKKLDLPKPSFEIFTGNGFDVHEFGENRPLLLAGVQIHPTMGLKAHSDGDVLAHSLTDAILGAAVLGDIGELYPDTDMKFKNANSMELLKQAYDKVREVGFELINIDICVMAQSPKLKDFKQAMQSNIAHTLDLDEFRINVKATTTEKLGFIGRKEGMAVLSSVNLKYFDWTRL.

Residues Met-1–Ile-210 are 2-C-methyl-D-erythritol 4-phosphate cytidylyltransferase. The tract at residues Phe-211–Leu-371 is 2-C-methyl-D-erythritol 2,4-cyclodiphosphate synthase. A divalent metal cation is bound by residues Asp-217 and His-219. Residues Asp-217–His-219 and His-243–Ser-244 contribute to the 4-CDP-2-C-methyl-D-erythritol 2-phosphate site. His-251 contacts a divalent metal cation. 4-CDP-2-C-methyl-D-erythritol 2-phosphate-binding positions include Asp-265 to Gly-267, Tyr-270 to Asp-274, Thr-341 to Glu-344, Phe-348, and Arg-351.

This sequence in the N-terminal section; belongs to the IspD/TarI cytidylyltransferase family. IspD subfamily. It in the C-terminal section; belongs to the IspF family. A divalent metal cation serves as cofactor.

It carries out the reaction 2-C-methyl-D-erythritol 4-phosphate + CTP + H(+) = 4-CDP-2-C-methyl-D-erythritol + diphosphate. The enzyme catalyses 4-CDP-2-C-methyl-D-erythritol 2-phosphate = 2-C-methyl-D-erythritol 2,4-cyclic diphosphate + CMP. Its pathway is isoprenoid biosynthesis; isopentenyl diphosphate biosynthesis via DXP pathway; isopentenyl diphosphate from 1-deoxy-D-xylulose 5-phosphate: step 2/6. It functions in the pathway isoprenoid biosynthesis; isopentenyl diphosphate biosynthesis via DXP pathway; isopentenyl diphosphate from 1-deoxy-D-xylulose 5-phosphate: step 4/6. In terms of biological role, bifunctional enzyme that catalyzes the formation of 4-diphosphocytidyl-2-C-methyl-D-erythritol from CTP and 2-C-methyl-D-erythritol 4-phosphate (MEP) (IspD), and catalyzes the conversion of 4-diphosphocytidyl-2-C-methyl-D-erythritol 2-phosphate (CDP-ME2P) to 2-C-methyl-D-erythritol 2,4-cyclodiphosphate (ME-CPP) with a corresponding release of cytidine 5-monophosphate (CMP) (IspF). This is Bifunctional enzyme IspD/IspF from Campylobacter jejuni subsp. doylei (strain ATCC BAA-1458 / RM4099 / 269.97).